The following is a 198-amino-acid chain: FMN-dependent NADH:quinone oxidoreductase (198 aa).

92–95 contributes to the FMN binding site; it reads MWNL.

This sequence belongs to the azoreductase type 1 family. As to quaternary structure, homodimer. FMN serves as cofactor.

It carries out the reaction 2 a quinone + NADH + H(+) = 2 a 1,4-benzosemiquinone + NAD(+). The enzyme catalyses N,N-dimethyl-1,4-phenylenediamine + anthranilate + 2 NAD(+) = 2-(4-dimethylaminophenyl)diazenylbenzoate + 2 NADH + 2 H(+). Quinone reductase that provides resistance to thiol-specific stress caused by electrophilic quinones. Its function is as follows. Also exhibits azoreductase activity. Catalyzes the reductive cleavage of the azo bond in aromatic azo compounds to the corresponding amines. This Clostridium beijerinckii (strain ATCC 51743 / NCIMB 8052) (Clostridium acetobutylicum) protein is FMN-dependent NADH:quinone oxidoreductase.